The chain runs to 236 residues: UPF0257 lipoprotein YnfC (236 aa).

An N-terminal signal peptide occupies residues 1–16 (MKKPLLLTLLCMILAG). Cys-17 carries N-palmitoyl cysteine lipidation. Cys-17 carries the S-diacylglycerol cysteine lipid modification.

The protein belongs to the UPF0257 family.

It is found in the cell membrane. The chain is UPF0257 lipoprotein YnfC from Salmonella heidelberg (strain SL476).